The following is a 344-amino-acid chain: Heat-inducible transcription repressor HrcA (344 aa).

Belongs to the HrcA family.

Negative regulator of class I heat shock genes (grpE-dnaK-dnaJ and groELS operons). Prevents heat-shock induction of these operons. The sequence is that of Heat-inducible transcription repressor HrcA from Streptococcus equi subsp. equi (strain 4047).